A 634-amino-acid polypeptide reads, in one-letter code: Kelch-like protein 22 (634 aa).

Ala2 bears the N-acetylalanine mark. A BTB domain is found at 50 to 117; sequence FDVVLVVEGR…IYTSELELSL (68 aa). 6 Kelch repeats span residues 299–349, 350–399, 400–446, 448–493, 494–544, and 545–593; these read CVVG…VLNN, FVYL…VVGR, YIYA…TLEG, MYVT…TLLD, KLYV…VLDT, and RIYV…VLTL. Position 463 is a phosphothreonine (Thr463). Tyr466 is subject to Phosphotyrosine. A disordered region spans residues 600-634; the sequence is EPPRGTPDRSQADPDFASEVMSVSDWEEFDNSSED. A Phosphothreonine modification is found at Thr605. Acidic residues predominate over residues 624–634; the sequence is DWEEFDNSSED.

In terms of assembly, component of the BCR(KLHL22) E3 ubiquitin ligase complex, at least composed of CUL3, KLHL22 and RBX1. Interacts with PLK1. Interacts with DEPDC5 (via DEP domain); the interaction depends on amino acid availability. Interacts with YWHAE; required for the nuclear localization of KLHL22 upon amino acid starvation.

It is found in the cytoplasm. The protein resides in the cytosol. Its subcellular location is the cytoskeleton. The protein localises to the microtubule organizing center. It localises to the centrosome. It is found in the spindle. The protein resides in the nucleus. Its subcellular location is the lysosome. It participates in protein modification; protein ubiquitination. Substrate-specific adapter of a BCR (BTB-CUL3-RBX1) E3 ubiquitin ligase complex required for chromosome alignment and localization of PLK1 at kinetochores. The BCR(KLHL22) ubiquitin ligase complex mediates monoubiquitination of PLK1, leading to PLK1 dissociation from phosphoreceptor proteins and subsequent removal from kinetochores, allowing silencing of the spindle assembly checkpoint (SAC) and chromosome segregation. Monoubiquitination of PLK1 does not lead to PLK1 degradation. The BCR(KLHL22) ubiquitin ligase complex is also responsible for the amino acid-stimulated 'Lys-48' polyubiquitination and proteasomal degradation of DEPDC5. Through the degradation of DEPDC5, releases the GATOR1 complex-mediated inhibition of the TORC1 pathway. It is therefore an amino acid-dependent activator within the amino acid-sensing branch of the TORC1 pathway, indirectly regulating different cellular processes including cell growth and autophagy. This chain is Kelch-like protein 22 (KLHL22), found in Ailuropoda melanoleuca (Giant panda).